Here is an 806-residue protein sequence, read N- to C-terminus: MGTKIMLVSYKWLKELVDIDVTPAALAEKMSATSIEVEGIEVPADGLSKLVVGHVLSCEDVPETHLHLCQVDTGDETPRQIVCGAPNVKAGIKVIVAVPGARIADNYKIKKGKIRGMESLGMICSLQELGLSDSIIPKEFSDGIQILPEEAVPGDAIFKYLDLDDHIIELSITPNRADALSMRGVAHEVAAIYGKSVSFPQKNLQESDKATSEAIEVAIASDNVLTYASRVVENVKVKPSPQWLQNLLMNAGIRPINNVVDVTNYVLLYFGQPMHAFDYDKFEDHKIVARAARQGESLVTLDGEKRDLTTEDLVITVADKPVALAGVMGGQATEIDANSQTVVLEVAVFDGKSIRKTSGRLNLRSESSSRFEKGVNYATVLEALDFAAAMLQELAEGQVLSGHVQAGQLPTEPVEVSTSLDYVNVRLGTELTFADIQRIFDQLGFGLTGDETSFTVAVPRRRWDVSIPADLVEEIARIYGYDKLPTTLPEAGGTAAELTPTQALRRKVRGLAEGLGLTEIISYALTTPEKAVEFAVAPSHLTELMWPMSVERSALRQNMVSGMLDTVAYNVARKQSNLALYEIGKIFEQEANPKEDLPNELNHFAFAICGLVAQKDFQTQAQAVDFYHAKGILDTLFANLNLKVQYVPTKDLASMHPGRTALILLDEQVIGFVGQVHPGTAKAYSIPETYVAELDMAALEAALPSDQTFAEITKFPAMTRDVALLLDREVSHQAIVTAIESAGVKRLTKIKLFDVYEGVTIQAGKKSMAYSLTFQNPNDNLTDEEVAKYMEKITKALTEQVGAEVR.

The tRNA-binding domain occupies A44–F158. Residues T411–T486 form the B5 domain. Mg(2+) contacts are provided by D464, D470, E473, and E474. The 94-residue stretch at T713–R806 folds into the FDX-ACB domain.

Belongs to the phenylalanyl-tRNA synthetase beta subunit family. Type 1 subfamily. Tetramer of two alpha and two beta subunits. Mg(2+) serves as cofactor.

Its subcellular location is the cytoplasm. The catalysed reaction is tRNA(Phe) + L-phenylalanine + ATP = L-phenylalanyl-tRNA(Phe) + AMP + diphosphate + H(+). This is Phenylalanine--tRNA ligase beta subunit from Streptococcus pyogenes serotype M28 (strain MGAS6180).